The chain runs to 757 residues: E3 ubiquitin-protein ligase SMURF1 (757 aa).

A C2 domain is found at methionine 1–lysine 120. A disordered region spans residues glycine 193 to proline 237. Serine 200 is subject to Phosphoserine. 2 WW domains span residues proline 234 to isoleucine 267 and glycine 306 to leucine 339. Residues lysine 381 and lysine 383 each participate in a glycyl lysine isopeptide (Lys-Gly) (interchain with G-Cter in ubiquitin) cross-link. In terms of domain architecture, HECT spans arginine 420 to glutamate 757. The active-site Glycyl thioester intermediate is cysteine 725.

As to quaternary structure, interacts with TRAF4. Interacts (via HECT domain) with FBXL15 (via LRR repeats). Interacts with SMAD7 and TGFBR1; SMAD7 recruits SMURF1 to TGFBR1 and regulates TGF-beta receptor degradation. Interacts with MAVS; the interaction is mediated by NDFIP1. In terms of processing, auto-ubiquitinated in presence of NDFIP1. Ubiquitinated by the SCF(FBXL15) complex at Lys-381 and Lys-383, leading to its degradation by the proteasome. Lys-383 is the primary ubiquitination site. Expressed in melanocytes.

The protein resides in the cytoplasm. The protein localises to the cell membrane. It carries out the reaction S-ubiquitinyl-[E2 ubiquitin-conjugating enzyme]-L-cysteine + [acceptor protein]-L-lysine = [E2 ubiquitin-conjugating enzyme]-L-cysteine + N(6)-ubiquitinyl-[acceptor protein]-L-lysine.. It participates in protein modification; protein ubiquitination. Functionally, E3 ubiquitin-protein ligase that acts as a negative regulator of BMP signaling pathway. Mediates ubiquitination and degradation of SMAD1 and SMAD5, 2 receptor-regulated SMADs specific for the BMP pathway. Promotes ubiquitination and subsequent proteasomal degradation of TRAF family members and RHOA. Promotes ubiquitination and subsequent proteasomal degradation of MAVS. Acts as an antagonist of TGF-beta signaling by ubiquitinating TGFBR1 and targeting it for degradation. Plays a role in dendrite formation by melanocytes. The sequence is that of E3 ubiquitin-protein ligase SMURF1 (SMURF1) from Homo sapiens (Human).